The sequence spans 43 residues: Protein PsbN (43 aa).

Residues 5 to 25 (LILSIFIFSLLLGITSYSIYI) traverse the membrane as a helical segment.

This sequence belongs to the PsbN family.

The protein resides in the plastid. Its subcellular location is the chloroplast thylakoid membrane. Functionally, may play a role in photosystem I and II biogenesis. In Cyanidium caldarium (Red alga), this protein is Protein PsbN.